Reading from the N-terminus, the 106-residue chain is Large ribosomal subunit protein bL21 (106 aa).

Belongs to the bacterial ribosomal protein bL21 family. As to quaternary structure, part of the 50S ribosomal subunit. Contacts protein L20.

In terms of biological role, this protein binds to 23S rRNA in the presence of protein L20. The sequence is that of Large ribosomal subunit protein bL21 from Streptomyces coelicolor (strain ATCC BAA-471 / A3(2) / M145).